Here is a 66-residue protein sequence, read N- to C-terminus: uncharacterized protein (66 aa).

This is an uncharacterized protein from Methanocaldococcus jannaschii (strain ATCC 43067 / DSM 2661 / JAL-1 / JCM 10045 / NBRC 100440) (Methanococcus jannaschii).